The chain runs to 342 residues: RNA 3'-terminal phosphate cyclase (342 aa).

ATP is bound by residues Q103 and Y283–Q287. The Tele-AMP-histidine intermediate role is filled by H308.

Belongs to the RNA 3'-terminal cyclase family. Type 1 subfamily.

Its subcellular location is the cytoplasm. It carries out the reaction a 3'-end 3'-phospho-ribonucleotide-RNA + ATP = a 3'-end 2',3'-cyclophospho-ribonucleotide-RNA + AMP + diphosphate. In terms of biological role, catalyzes the conversion of 3'-phosphate to a 2',3'-cyclic phosphodiester at the end of RNA. The mechanism of action of the enzyme occurs in 3 steps: (A) adenylation of the enzyme by ATP; (B) transfer of adenylate to an RNA-N3'P to produce RNA-N3'PP5'A; (C) and attack of the adjacent 2'-hydroxyl on the 3'-phosphorus in the diester linkage to produce the cyclic end product. The biological role of this enzyme is unknown but it is likely to function in some aspects of cellular RNA processing. The sequence is that of RNA 3'-terminal phosphate cyclase from Shigella dysenteriae serotype 1 (strain Sd197).